Here is a 110-residue protein sequence, read N- to C-terminus: UPF0060 membrane protein Dtpsy_1668 (110 aa).

Helical transmembrane passes span Leu7–Trp27, Ser33–Leu53, Ala63–Val83, and Gly86–Ala106.

The protein belongs to the UPF0060 family.

The protein localises to the cell inner membrane. This Acidovorax ebreus (strain TPSY) (Diaphorobacter sp. (strain TPSY)) protein is UPF0060 membrane protein Dtpsy_1668.